The primary structure comprises 389 residues: Leucine aminopeptidase 1 (389 aa).

Positions 1–19 (MKLPALLTLGVAASTMVLA) are cleaved as a signal peptide. Positions 20 to 88 (AIAPDQVPLN…LPKVFPTPAV (69 aa)) are excised as a propeptide. N-linked (GlcNAc...) asparagine glycans are attached at residues Asn-96, Asn-119, Asn-149, Asn-164, and Asn-181. 2 residues coordinate Zn(2+): His-189 and Asp-208. A glycan (N-linked (GlcNAc...) asparagine) is linked at Asn-233. Residues Glu-247 and Asp-274 each coordinate Zn(2+). Cys-323 and Cys-327 are oxidised to a cystine. His-356 is a Zn(2+) binding site.

It belongs to the peptidase M28 family. M28E subfamily. Monomer. Zn(2+) serves as cofactor.

Its subcellular location is the secreted. Its function is as follows. Extracellular aminopeptidase that allows assimilation of proteinaceous substrates. This Paracoccidioides brasiliensis (strain Pb18) protein is Leucine aminopeptidase 1 (LAP1).